We begin with the raw amino-acid sequence, 428 residues long: Spermidine/putrescine import ATP-binding protein PotA (428 aa).

Residues 6 to 238 enclose the ABC transporter domain; the sequence is IEFKNVSKTY…PINHFVADFI (233 aa). 40–47 provides a ligand contact to ATP; the sequence is GASGSGKS.

This sequence belongs to the ABC transporter superfamily. Spermidine/putrescine importer (TC 3.A.1.11.1) family. As to quaternary structure, the complex is composed of two ATP-binding proteins (PotA), two transmembrane proteins (PotB and PotC) and a solute-binding protein (PotD).

The protein localises to the cell membrane. The catalysed reaction is ATP + H2O + polyamine-[polyamine-binding protein]Side 1 = ADP + phosphate + polyamineSide 2 + [polyamine-binding protein]Side 1.. Part of the ABC transporter complex PotABCD involved in spermidine/putrescine import. Responsible for energy coupling to the transport system. The polypeptide is Spermidine/putrescine import ATP-binding protein PotA (Lactococcus lactis subsp. lactis (strain IL1403) (Streptococcus lactis)).